A 142-amino-acid polypeptide reads, in one-letter code: Large ribosomal subunit protein uL16 (142 aa).

It belongs to the universal ribosomal protein uL16 family. As to quaternary structure, part of the 50S ribosomal subunit.

Functionally, binds 23S rRNA and is also seen to make contacts with the A and possibly P site tRNAs. This Thermotoga neapolitana (strain ATCC 49049 / DSM 4359 / NBRC 107923 / NS-E) protein is Large ribosomal subunit protein uL16.